Reading from the N-terminus, the 410-residue chain is Probable inactive allantoicase (410 aa).

Belongs to the allantoicase family.

The function of this enzyme is unclear as allantoicase activity is not known to exist in mammals. The sequence is that of Probable inactive allantoicase (ALLC) from Macaca fascicularis (Crab-eating macaque).